A 784-amino-acid polypeptide reads, in one-letter code: Lon protease (784 aa).

The 194-residue stretch at 11-204 folds into the Lon N-terminal domain; that stretch reads IPVLPLRDVV…YLMAMMESEI (194 aa). 356-363 lines the ATP pocket; sequence GPPGVGKT. The Lon proteolytic domain occupies 592–773; that stretch reads ENRVGQVTGL…EEVLTLALQN (182 aa). Residues S679 and K722 contribute to the active site.

The protein belongs to the peptidase S16 family. Homohexamer. Organized in a ring with a central cavity. ATP binding and hydrolysis do not affect the oligomeric state of the enzyme.

The protein localises to the cytoplasm. The catalysed reaction is Hydrolysis of proteins in presence of ATP.. Its activity is regulated as follows. Contains an allosteric site (distinct from its active site), whose occupancy by an unfolded polypeptide leads to enzyme activation. Functionally, ATP-dependent serine protease that mediates the selective degradation of mutant and abnormal proteins as well as certain short-lived regulatory proteins. Required for cellular homeostasis and for survival from DNA damage and developmental changes induced by stress. Degrades polypeptides processively to yield small peptide fragments that are 5 to 10 amino acids long. Binds to DNA in a double-stranded, site-specific manner. Endogenous substrates include the regulatory proteins RcsA and SulA, the transcriptional activator SoxS, and UmuD. Its overproduction specifically inhibits translation through at least two different pathways, one of them being the YoeB-YefM toxin-antitoxin system. This is Lon protease from Escherichia coli O6:H1 (strain CFT073 / ATCC 700928 / UPEC).